Consider the following 876-residue polypeptide: MAP7 domain-containing protein 3 (876 aa).

3 disordered regions span residues 30–139 (AEER…KFKA), 162–200 (GGVM…VDNT), and 402–438 (TEAP…IDKR). Residues 39–54 (INSSAGANKRSSSTPD) are compositionally biased toward polar residues. A coiled-coil region spans residues 58–136 (LKNDVKQQLA…KQKQAEDTEK (79 aa)). Composition is skewed to basic and acidic residues over residues 60–139 (NDVK…KFKA) and 169–196 (KSGK…DMQH). A phosphoserine mark is found at S417 and S483. Coiled-coil stretches lie at residues 549–578 (IQIR…IARK) and 626–658 (SAMM…RRKA). Disordered regions lie at residues 558–683 (QSKN…EIFP) and 742–783 (IQGK…NPNH). Composition is skewed to basic and acidic residues over residues 559–590 (SKNE…DKVP) and 630–659 (KSRD…RKAS). Residues 665–679 (SEDEADDEGESEDSL) show a composition bias toward acidic residues. The span at 750 to 763 (SAKKPPTRPIRSRK) shows a compositional bias: basic residues. Positions 771-782 (IRPTQSASSNPN) are enriched in polar residues.

It belongs to the MAP7 family. High expression in lung, skeletal muscle, brain, and kidney, with much weaker expression in spleen, small intestine, liver, and heart.

The protein resides in the cytoplasm. The protein localises to the cytoskeleton. Its subcellular location is the spindle. In terms of biological role, promotes the assembly and stability of microtubules. In Mus musculus (Mouse), this protein is MAP7 domain-containing protein 3 (Map7d3).